Reading from the N-terminus, the 220-residue chain is dITP/XTP pyrophosphatase (220 aa).

13–18 (SHNAGK) contributes to the substrate binding site. The Mg(2+) site is built by D45 and D74. Residue D74 is the Proton acceptor of the active site. Substrate is bound by residues S75, 163-166 (FGYD), K186, and 199-200 (HR).

Belongs to the HAM1 NTPase family. In terms of assembly, homodimer. The cofactor is Mg(2+).

It carries out the reaction XTP + H2O = XMP + diphosphate + H(+). The catalysed reaction is dITP + H2O = dIMP + diphosphate + H(+). The enzyme catalyses ITP + H2O = IMP + diphosphate + H(+). Pyrophosphatase that catalyzes the hydrolysis of nucleoside triphosphates to their monophosphate derivatives, with a high preference for the non-canonical purine nucleotides XTP (xanthosine triphosphate), dITP (deoxyinosine triphosphate) and ITP. Seems to function as a house-cleaning enzyme that removes non-canonical purine nucleotides from the nucleotide pool, thus preventing their incorporation into DNA/RNA and avoiding chromosomal lesions. In Brucella melitensis biotype 1 (strain ATCC 23456 / CCUG 17765 / NCTC 10094 / 16M), this protein is dITP/XTP pyrophosphatase.